Consider the following 404-residue polypeptide: Argininosuccinate synthase (404 aa).

Residue 15-23 coordinates ATP; sequence AYSGGLDTS. Tyr-94 provides a ligand contact to L-citrulline. ATP is bound at residue Gly-124. L-aspartate-binding residues include Thr-126, Asn-130, and Asp-131. Asn-130 is a binding site for L-citrulline. L-citrulline contacts are provided by Arg-134, Ser-182, Glu-266, and Tyr-278.

The protein belongs to the argininosuccinate synthase family. Type 1 subfamily. In terms of assembly, homotetramer.

The protein localises to the cytoplasm. The catalysed reaction is L-citrulline + L-aspartate + ATP = 2-(N(omega)-L-arginino)succinate + AMP + diphosphate + H(+). It functions in the pathway amino-acid biosynthesis; L-arginine biosynthesis; L-arginine from L-ornithine and carbamoyl phosphate: step 2/3. In Streptomyces avermitilis (strain ATCC 31267 / DSM 46492 / JCM 5070 / NBRC 14893 / NCIMB 12804 / NRRL 8165 / MA-4680), this protein is Argininosuccinate synthase.